The primary structure comprises 498 residues: Peptidase inhibitor 16 (498 aa).

The N-terminal stretch at 1-29 (MHGSCSPWVMLPPPLLLLLLLIATGPTTA) is a signal peptide. In terms of domain architecture, SCP spans 39–167 (VDLHNQYRAQ…ANIHLLVCNY (129 aa)). N-linked (GlcNAc...) asparagine glycosylation is present at Asn-116. Disordered stretches follow at residues 204 to 277 (NPEK…GPSS), 317 to 407 (PKSM…SPLS), and 419 to 467 (ERGG…ENPE). Composition is skewed to polar residues over residues 218 to 277 (VPST…GPSS) and 344 to 353 (LTESGESVPQ). Residues 367–380 (PEAILPEAEAAPTE) are compositionally biased toward low complexity. The segment covering 383-397 (VELREPEAESPKAES) has biased composition (basic and acidic residues). Polar residues predominate over residues 437–447 (SLPTFPSASGN). Asn-447 is a glycosylation site (N-linked (GlcNAc...) asparagine).

Belongs to the CRISP family. Interacts with PSP94/MSMB. Post-translationally, N-glycosylated. As to expression, expressed strongly in aorta and skin, and weakly in adipose tissue (at protein level). In heart, found in the extracellular space surrounding cardiomyocytes (at protein level).

The protein localises to the secreted. May inhibit cardiomyocyte growth. The chain is Peptidase inhibitor 16 (Pi16) from Mus musculus (Mouse).